A 232-amino-acid polypeptide reads, in one-letter code: uncharacterized protein (232 aa).

Disordered stretches follow at residues Val123–Pro147 and Ala169–Arg200.

The protein belongs to the mycobacterial PPE family.

This is an uncharacterized protein from Mycobacterium tuberculosis (strain ATCC 25618 / H37Rv).